Consider the following 518-residue polypeptide: MTQHDRLLIIDFGSQVTQLIARRLRELNVYCEIHPYQNVTEAFLKGFAPKAVIFSGGPSSVFAEGAPMPPACVFEMGVPILGICYGQQVMMHCLGGKVERGHGTAEFGRAFVTPAEGRLAILDGWFEDGREQVWMSHGDHVSQIAPGFQVFGTSPNAPFAITADPARHFYAVQFHPEVHHTPKGAKLYENFVKLAGFKGDWTMGAYREEAIAKIRAQVGDQKVICGLSGGVDSSVAAVLIHEAIGDQLTCVFVDHGLLRLGEAEQVVTMFRDHYNMPLIHADESDLFLGALEGVSDPEVKRKTIGRLFIDVFQKHAADVGGATFLAQGTLYPDVIESVSFSGGPSVTIKSHHNVGGLPEKMGLKLVEPLRELFKDEVRALGRELGLPDSFIGRHPFPGPGLAIRCPGEITREKLEILRQADAVYIDQIRRHGLYDEIWQAFVALLPVRTVGVMGDGRTYDYACALRAVTSVDGMTADYYPFTHEFLGETATRIINEVQGINRVTYDITSKPPGTIEWE.

The region spanning 6–200 is the Glutamine amidotransferase type-1 domain; sequence RLLIIDFGSQ…FVKLAGFKGD (195 aa). Cys84 (nucleophile) is an active-site residue. Residues His175 and Glu177 contribute to the active site. The GMPS ATP-PPase domain maps to 201-393; the sequence is WTMGAYREEA…LGLPDSFIGR (193 aa). 228-234 contacts ATP; it reads SGGVDSS.

As to quaternary structure, homodimer.

It carries out the reaction XMP + L-glutamine + ATP + H2O = GMP + L-glutamate + AMP + diphosphate + 2 H(+). Its pathway is purine metabolism; GMP biosynthesis; GMP from XMP (L-Gln route): step 1/1. Catalyzes the synthesis of GMP from XMP. The sequence is that of GMP synthase [glutamine-hydrolyzing] from Cereibacter sphaeroides (strain ATCC 17025 / ATH 2.4.3) (Rhodobacter sphaeroides).